A 559-amino-acid polypeptide reads, in one-letter code: Cytoplasmic polyadenylation element-binding protein 1 (559 aa).

A disordered region spans residues 222–243; the sequence is SRMDHSSSPLTPPPSASPSGSL. RRM domains are found at residues 304–401 and 423–504; these read CKVF…DAQV and NTVF…PYLE. Positions 508, 511, 520, 525, 530, 533, 538, and 546 each coordinate Zn(2+).

It belongs to the RRM CPEB family. As to expression, expressed in oocytes (at protein level). During oocyte maturation becomes detectable at stage Ib, and remains ubiquitously distributed within the oocyte cytoplasm until stage II. It then follows a gradual accumulation to the future animal pole during stage III, and remains localized to this pole at stage IV (at protein level). Expressed in oocytes, blastomeres and pre-mid-blastula transition embryos. Its expression during oogenesis is ubiquitous at stages I and II, but gradually accumulated at the periphery of the oocyte in the presumptive animal pole during stage III. Expression was maintained in that region at stage IV, and then became delocalized at stage V to cover a much broader area presumably encompassing the future blastodisc.

It is found in the cytoplasm. In terms of biological role, sequence-specific RNA-binding protein that regulates mRNA cytoplasmic polyadenylation and translation initiation during oocyte maturation and early development. Binds to the cytoplasmic polyadenylation element (CPE), an uridine-rich sequence element (consensus sequence 5'-UUUUUAU-3') within the mRNA 3'-UTR. This is Cytoplasmic polyadenylation element-binding protein 1 (cpeb1) from Danio rerio (Zebrafish).